A 140-amino-acid polypeptide reads, in one-letter code: Histone H3-like protein (140 aa).

The segment at 1–36 (MSRTKQTASKALGGKAPRKGISAKSIPSSGCSPAMP) is disordered. Lys5 is subject to N6,N6,N6-trimethyllysine; alternate. Position 5 is an N6,N6-dimethyllysine; alternate (Lys5). N6-methyllysine; alternate occurs at positions 5 and 10. An N6-acetyllysine; alternate mark is found at Lys10, Lys15, Lys19, and Lys24. Position 15 is an N6,N6-dimethyllysine; alternate (Lys15). N6-methyllysine; alternate is present on residues Lys19 and Lys24. 2 positions are modified to N6-acetyllysine: Lys56 and Lys64.

This sequence belongs to the histone H3 family. In terms of assembly, the nucleosome is a histone octamer containing two molecules each of H2A, H2B, H3 and H4 assembled in one H3-H4 heterotetramer and two H2A-H2B heterodimers. The octamer wraps approximately 147 bp of DNA. Mono-, di- and trimethylated to form H3K4me1/2/3. H3K4me activates gene expression by regulating transcription elongation and plays a role in telomere length maintenance. H3K4me enrichment correlates with transcription levels, and occurs in a 5' to 3' gradient with H3K4me3 enrichment at the 5'-end of genes, shifting to H3K4me2 and then H3K4me1. In terms of processing, acetylation of histone H3 leads to transcriptional activation.

The protein resides in the nucleus. Its subcellular location is the chromosome. Its function is as follows. Core component of nucleosome. Nucleosomes wrap and compact DNA into chromatin, limiting DNA accessibility to the cellular machineries which require DNA as a template. Histones thereby play a central role in transcription regulation, DNA repair, DNA replication and chromosomal stability. DNA accessibility is regulated via a complex set of post-translational modifications of histones, also called histone code, and nucleosome remodeling. The chain is Histone H3-like protein from Encephalitozoon cuniculi (strain GB-M1) (Microsporidian parasite).